The primary structure comprises 835 residues: Ion-translocating oxidoreductase complex subunit C (835 aa).

4Fe-4S ferredoxin-type domains are found at residues 368 to 397 (YAPPAPEQSCIRCSACSDACPVSLMPQQLY) and 407 to 436 (KSEEYALKDCIECGLCAYVCPSHIPLIQYF). Residues C377, C380, C383, C387, C416, C419, C422, and C426 each coordinate [4Fe-4S] cluster. Over residues 468 to 489 (AREEQERKARAQKAMEARRQEM) the composition is skewed to basic and acidic residues. 7 disordered regions span residues 468–492 (AREEQERKARAQKAMEARRQEMKTA), 540–574 (QRKARRLARQQQTQNTDVSQVETNEENKSTDSKSA), 586–618 (KAAQQGSALEKDEISSSDTLSVGNDTEPVAEDP), 634–666 (KAAQQGSAVEKDEISSSNTLSVGNDTEPVADDP), 682–714 (KAAQQGSAVEQDEISSSDTLSIGNEAEPVADDP), 730–762 (KAAQQRSAVEQDEISSSDTLSVGNETESVAEDP), and 778–811 (KAAQQRSAVEQDEISSSDTLSVGNETESVAEDPR). The segment covering 552–561 (TQNTDVSQVE) has biased composition (polar residues). The segment covering 648 to 657 (SSSNTLSVGN) has biased composition (polar residues). Composition is skewed to polar residues over residues 745–756 (SSDTLSVGNETE) and 793–804 (SSDTLSVGNETE).

This sequence belongs to the 4Fe4S bacterial-type ferredoxin family. RnfC subfamily. In terms of assembly, the complex is composed of six subunits: RnfA, RnfB, RnfC, RnfD, RnfE and RnfG. The cofactor is [4Fe-4S] cluster.

Its subcellular location is the cell inner membrane. Its function is as follows. Part of a membrane-bound complex that couples electron transfer with translocation of ions across the membrane. The sequence is that of Ion-translocating oxidoreductase complex subunit C from Pasteurella multocida (strain Pm70).